Here is a 254-residue protein sequence, read N- to C-terminus: Mitochondrial cardiolipin hydrolase (254 aa).

Over 1–9 (MERFRWQVA) the chain is Mitochondrial intermembrane. Positions 1–43 (MERFRWQVAAVAAVGLALALEALPSVLCWLRAGRRQQQRPPRR) are required for mitochondrial localization. Residues 10–32 (AVAAVGLALALEALPSVLCWLRA) traverse the membrane as a helical segment. Residues 33-254 (GRRQQQRPPR…SKCSHHLSQV (222 aa)) are Cytoplasmic-facing. Residues 49–82 (PSQVTCTEALLQAPGEAPSGPPAGCRCSLPHGES) form a C3H1-type; atypical zinc finger. The 28-residue stretch at 155-182 (DLGYMHHKFAIVDKKVLITGSLNWTTQA) folds into the PLD phosphodiesterase domain. Active-site residues include His160, Lys162, and Asp167.

It belongs to the phospholipase D family. MitoPLD/Zucchini subfamily. In terms of assembly, homodimer. Interacts with MOV10L1. Interacts with MIGA1 and MIGA2; possibly facilitating homodimer formation. Interacts with GK2.

The protein localises to the mitochondrion outer membrane. It localises to the nucleus membrane. Its subcellular location is the cell membrane. The protein resides in the golgi apparatus. The catalysed reaction is a cardiolipin + H2O = a 1,2-diacyl-sn-glycero-3-phospho-(1'-sn-glycerol) + a 1,2-diacyl-sn-glycero-3-phosphate + H(+). Its activity is regulated as follows. Single stranded DNA (ssDNA) hydrolase activity does not depend upon, but is stimulated by the presence of Ca(2+) and Mn(2+). MIGA1 and MIGA2 increase PLD6 self-association affinity and affects the homodimer conformation facilitating its phospholipase activity over the nuclease activity. MYC induces its expression and stimulates its phospholipase activity. Functionally, presents phospholipase and nuclease activities, depending on the different physiological conditions. Interaction with Mitoguardin (MIGA1 or MIGA2) affects the dimer conformation, facilitating the lipase activity over the nuclease activity. Plays a key role in mitochondrial fusion and fission via its phospholipase activity. In its phospholipase role, it uses the mitochondrial lipid cardiolipin as substrate to generate phosphatidate (PA or 1,2-diacyl-sn-glycero-3-phosphate), a second messenger signaling lipid. Production of PA facilitates Mitofusin-mediated fusion, whereas the cleavage of PA by the Lipin family of phosphatases produces diacylgycerol (DAG) which promotes mitochondrial fission. Both Lipin and DAG regulate mitochondrial dynamics and membrane fusion/fission, important processes for adapting mitochondrial metabolism to changes in cell physiology. Mitochondrial fusion enables cells to cope with the increased nucleotide demand during DNA synthesis. Mitochondrial function and dynamics are closely associated with biological processes such as cell growth, proliferation, and differentiation. Mediator of MYC activity, promotes mitochondrial fusion and activates AMPK which in turn inhibits YAP/TAZ, thereby inducing cell growth and proliferation. The endonuclease activity plays a critical role in PIWI-interacting RNA (piRNA) biogenesis during spermatogenesis. Implicated in spermatogenesis and sperm fertility in testicular germ cells, its single strand-specific nuclease activity is critical for the biogenesis/maturation of PIWI-interacting RNA (piRNA). MOV10L1 selectively binds to piRNA precursors and funnels them to the endonuclease that catalyzes the first cleavage step of piRNA processing to generate piRNA intermediate fragments that are subsequently loaded to Piwi proteins. Cleaves either DNA or RNA substrates with similar affinity, producing a 5' phosphate end, in this way it participates in the processing of primary piRNA transcripts. piRNAs provide essential protection against the activity of mobile genetic elements. piRNA-mediated transposon silencing is thus critical for maintaining genome stability, in particular in germline cells when transposons are mobilized as a consequence of wide-spread genomic demethylation. PA may act as signaling molecule in the recognition/transport of the precursor RNAs of primary piRNAs. Interacts with tesmin in testes, suggesting a role in spermatogenesis via association with its interacting partner. The polypeptide is Mitochondrial cardiolipin hydrolase (PLD6) (Canis lupus familiaris (Dog)).